Consider the following 448-residue polypeptide: N-succinylarginine dihydrolase (448 aa).

Substrate-binding positions include 20 to 29 (AGLLFGNEAS), N111, and 138 to 139 (HR). The active site involves E175. Residue R213 coordinates substrate. Residue H249 is part of the active site. Residues D251 and N360 each coordinate substrate. C366 functions as the Nucleophile in the catalytic mechanism.

The protein belongs to the succinylarginine dihydrolase family. As to quaternary structure, homodimer.

The enzyme catalyses N(2)-succinyl-L-arginine + 2 H2O + 2 H(+) = N(2)-succinyl-L-ornithine + 2 NH4(+) + CO2. It functions in the pathway amino-acid degradation; L-arginine degradation via AST pathway; L-glutamate and succinate from L-arginine: step 2/5. Functionally, catalyzes the hydrolysis of N(2)-succinylarginine into N(2)-succinylornithine, ammonia and CO(2). The sequence is that of N-succinylarginine dihydrolase from Shigella dysenteriae serotype 1 (strain Sd197).